We begin with the raw amino-acid sequence, 678 residues long: Serine/threonine-protein kinase PLK (678 aa).

Residues 22–309 (YRPGKLLGKG…VKECLDHSWL (288 aa)) enclose the Protein kinase domain. ATP-binding positions include 28–36 (LGKGGFAYV) and lysine 51. Catalysis depends on aspartate 145, which acts as the Proton acceptor. Residues threonine 179 and threonine 183 each carry the phosphothreonine; by autocatalysis modification. POLO box domains lie at 435-516 (YIMS…YLEN) and 563-644 (FLKK…IIKA). The disordered stretch occupies residues 658-678 (KDSTKKSASGSSTRQLGQGGE). A compositionally biased stretch (polar residues) spans 663–678 (KSASGSSTRQLGQGGE).

The protein belongs to the protein kinase superfamily. Ser/Thr protein kinase family. CDC5/Polo subfamily. Interacts with Kin-13. Autophosphorylated. Autophosphorylation is critical for its function in cell growth, cytokinesis and formation of flagella.

It is found in the cell projection. Its subcellular location is the cilium. The protein resides in the flagellum. It localises to the cytoplasm. The protein localises to the cytoskeleton. It is found in the flagellum basal body. Its subcellular location is the flagellum axoneme. The protein resides in the spindle. It localises to the membrane. The catalysed reaction is L-seryl-[protein] + ATP = O-phospho-L-seryl-[protein] + ADP + H(+). It catalyses the reaction L-threonyl-[protein] + ATP = O-phospho-L-threonyl-[protein] + ADP + H(+). With respect to regulation, inhibited by GW843286X (GW), an ATP-competitive inhibitor. Inhibition leads to reduced growth, increased number of cells with more than four nuclei, increased number of cells with condensed nuclei, cell cycle arrest at G2/M or G1/S phase depending on the treatment time with GW, and increased length of membrane-bound portions of the caudal and anterior flagella. In terms of biological role, involved in cell cycle. Involved in cell division. Involved in cytokinesis. Involved in flagella biogenesis and in regulation of flagella length in interphase. Involved in formation of median bodies during interphase. Phosphorylates Kin-13 in vitro. Likely regulates microtubule (MT) depolymerizing activity of Kin-13. This Giardia intestinalis (strain ATCC 50803 / WB clone C6) (Giardia lamblia) protein is Serine/threonine-protein kinase PLK.